Reading from the N-terminus, the 662-residue chain is UvrABC system protein B (662 aa).

In terms of domain architecture, Helicase ATP-binding spans 31 to 188 (DNIEGGEKAQ…NDLVDIQFER (158 aa)). 44 to 51 (GATGTGKT) provides a ligand contact to ATP. The short motif at 97–120 (YYDYYQPEAYVPSSDTYIEKDSSV) is the Beta-hairpin element. Residues 435–601 (QIDDLLGEIN…TIKKEIRDLI (167 aa)) enclose the Helicase C-terminal domain. Residues 626–661 (KELVKKLEKQMQEAVEVLDFELAAQIRDMMLEVKAL) enclose the UVR domain.

This sequence belongs to the UvrB family. As to quaternary structure, forms a heterotetramer with UvrA during the search for lesions. Interacts with UvrC in an incision complex.

The protein resides in the cytoplasm. The UvrABC repair system catalyzes the recognition and processing of DNA lesions. A damage recognition complex composed of 2 UvrA and 2 UvrB subunits scans DNA for abnormalities. Upon binding of the UvrA(2)B(2) complex to a putative damaged site, the DNA wraps around one UvrB monomer. DNA wrap is dependent on ATP binding by UvrB and probably causes local melting of the DNA helix, facilitating insertion of UvrB beta-hairpin between the DNA strands. Then UvrB probes one DNA strand for the presence of a lesion. If a lesion is found the UvrA subunits dissociate and the UvrB-DNA preincision complex is formed. This complex is subsequently bound by UvrC and the second UvrB is released. If no lesion is found, the DNA wraps around the other UvrB subunit that will check the other stand for damage. The polypeptide is UvrABC system protein B (Streptococcus pneumoniae serotype 19F (strain G54)).